A 109-amino-acid chain; its full sequence is Nucleoid-associated protein Ssed_2851 (109 aa).

The protein belongs to the YbaB/EbfC family. Homodimer.

It is found in the cytoplasm. The protein localises to the nucleoid. Binds to DNA and alters its conformation. May be involved in regulation of gene expression, nucleoid organization and DNA protection. In Shewanella sediminis (strain HAW-EB3), this protein is Nucleoid-associated protein Ssed_2851.